The primary structure comprises 252 residues: 3-dehydroquinate dehydratase (252 aa).

3-dehydroquinate is bound by residues Ser-21, 46 to 48 (EWR), and Arg-82. The active-site Proton donor/acceptor is the His-143. Residue Lys-170 is the Schiff-base intermediate with substrate of the active site. Residues Arg-213, Ser-232, and Gln-236 each contribute to the 3-dehydroquinate site.

The protein belongs to the type-I 3-dehydroquinase family. As to quaternary structure, homodimer.

It carries out the reaction 3-dehydroquinate = 3-dehydroshikimate + H2O. It participates in metabolic intermediate biosynthesis; chorismate biosynthesis; chorismate from D-erythrose 4-phosphate and phosphoenolpyruvate: step 3/7. Functionally, involved in the third step of the chorismate pathway, which leads to the biosynthesis of aromatic amino acids. Catalyzes the cis-dehydration of 3-dehydroquinate (DHQ) and introduces the first double bond of the aromatic ring to yield 3-dehydroshikimate. This is 3-dehydroquinate dehydratase from Salmonella dublin (strain CT_02021853).